The chain runs to 337 residues: MTKTLRVAVIGAGRMGADHIKRLSTRIHGAEVAAVVDVDLARAQAAIEGIDRAVALASADEALNNGDVNAVLIATPGFLHEEILYKALEKDFPILCEKPLTPDAGSAWKVVQAEQALGHKRIQVGFMRRFDAEYSALGAIIRNSELGELLMLHHQHRNPSTPEGFTNEMLINDSVVHEFDAIRFFTGEEITSVQVRLGKPTRSAPSGQHDPQHVLLETESGVLADVEIYVNAKFGYQVATQASFEEGIVSIGSDNGPYVQTAGKWGGNVTPGFEERFGAAYDVEVQAWVDAALRGEIGGPTAWDGYATAACCEAGVEAQKSGEKVKVQLNTKPDLYK.

Belongs to the Gfo/Idh/MocA family. As to quaternary structure, homotetramer.

It carries out the reaction myo-inositol + NAD(+) = scyllo-inosose + NADH + H(+). Functionally, involved in the oxidation of myo-inositol (MI) to 2-keto-myo-inositol (2KMI or 2-inosose). This is Inositol 2-dehydrogenase 1 from Paenarthrobacter aurescens (strain TC1).